The chain runs to 138 residues: Large ribosomal subunit protein uL16 (138 aa).

Residues 1-15 (MLSPRKVKYRKKQRG) are compositionally biased toward basic residues. Residues 1-20 (MLSPRKVKYRKKQRGRLSGE) form a disordered region.

This sequence belongs to the universal ribosomal protein uL16 family. In terms of assembly, part of the 50S ribosomal subunit.

Binds 23S rRNA and is also seen to make contacts with the A and possibly P site tRNAs. The polypeptide is Large ribosomal subunit protein uL16 (Borrelia turicatae (strain 91E135)).